The following is a 112-amino-acid chain: Integration host factor subunit alpha (112 aa).

Belongs to the bacterial histone-like protein family. Heterodimer of an alpha and a beta chain.

In terms of biological role, this protein is one of the two subunits of integration host factor, a specific DNA-binding protein that functions in genetic recombination as well as in transcriptional and translational control. In Allorhizobium ampelinum (strain ATCC BAA-846 / DSM 112012 / S4) (Agrobacterium vitis (strain S4)), this protein is Integration host factor subunit alpha.